The sequence spans 480 residues: Uridine/deoxyuridine transporter (480 aa).

14 helical membrane passes run 14-34, 55-75, 93-113, 115-135, 147-167, 174-194, 207-227, 239-259, 280-300, 320-340, 358-378, 382-402, 417-437, and 449-469; these read VGSIVALMVALLVAIFAFQLN, SIALTQTIFFTAAALFALFLP, LTMIGCLISGFATNVGILMIG, ILQGAAGPVVPLCLIILHVKV, ILTSINGGIAGVDALAGGWLV, SVFFVMGITAALAILLVSFGT, WTGVILLVVAMGALLSAVNAL, WLLASILALLGLICFVGFWQV, GLLITTLLTMTGVFAIMNGII, LVTLTPYALAGLFFGPVSGFL, IIGIVLAVAGVLQPSIWLLLL, FIGITYAGITNIMLNGLGIVL, GMFNLGAGLSFIILYAVPTVL, and ISGIVTGLILVIIAFFTSFLI.

It belongs to the major facilitator superfamily. EmrB family.

Its subcellular location is the cell membrane. Its function is as follows. Responsible for the uptake of uridine and deoxyuridine. Not involved in purine nucleoside uptake. This is Uridine/deoxyuridine transporter from Lactococcus lactis subsp. cremoris (strain MG1363).